We begin with the raw amino-acid sequence, 162 residues long: Retinoic acid receptor responder protein 2 (162 aa).

An N-terminal signal peptide occupies residues 1–20; it reads MKCLLISLALWLGTVGTRGT. 3 cysteine pairs are disulfide-bonded: Cys-79–Cys-89, Cys-100–Cys-119, and Cys-103–Cys-134. A propeptide spanning residues 157–162 is cleaved from the precursor; it reads RALRTK.

Secreted in an inactive precursor form, prochemerin, which is proteolytically processed by a variety of extracellular proteases to generate forms with differing levels of bioactivity. For example, the removal of six amino acids results in chemerin-156, which exhibits the highest activity, while removal of seven amino acids results in chemerin-155 which has slightly less activity. Some proteases are able to cleave at more than one site and chemerin forms may be sequentially processed by different enzymes to modulate activity levels. The coordinated expression and activity of chemerin-modifying enzymes is essential for regulating its bioactivation, inactivation and, consequently, biological function. Cathepsin G cleaves seven C-terminal amino acids from prochemerin (chemerin-155), elastase is able to cleave six (chemerin-156), eight (chemerin-154) or eleven (chemerin-151), plasmin cleaves five amino acids (chemerin-157), and tryptase cleaves five (chemerin-157) or eight (chemerin-154). Multiple cleavages might be required to fully activate chemerin, with an initial tryptase cleavage resulting in chemerin with low activity (chemerin-157), and a second cleavage by carboxypeptidase N or B producing highly active chemerin (chemerin-156). In terms of tissue distribution, expressed in the differentiated adipocytes (at protein level). Abundantly expressed in the liver, adipose tissue including visceral, epididymal, and brown adipose tissue.

It is found in the secreted. In terms of biological role, adipocyte-secreted protein (adipokine) that regulates adipogenesis, metabolism and inflammation through activation of the chemokine-like receptor 1 (CMKLR1). Also acts as a ligand for CMKLR2. Can also bind to C-C chemokine receptor-like 2 (CCRL2), but with a lower affinity than it does to CMKLR1 or CMKLR2. Positively regulates adipocyte differentiation, modulates the expression of adipocyte genes involved in lipid and glucose metabolism and might play a role in angiogenesis, a process essential for the expansion of white adipose tissue. Also acts as a pro-inflammatory adipokine, causing an increase in secretion of pro-inflammatory and prodiabetic adipokines, which further impair adipose tissue metabolic function and have negative systemic effects including impaired insulin sensitivity, altered glucose and lipid metabolism, and a decrease in vascular function in other tissues. Can have both pro- and anti-inflammatory properties depending on the modality of enzymatic cleavage by different classes of proteases. Acts as a chemotactic factor for leukocyte populations expressing CMKLR1, particularly immature plasmacytoid dendritic cells, but also immature myeloid DCs, macrophages and natural killer cells. Exerts an anti-inflammatory role by preventing TNF/TNFA-induced VCAM1 expression and monocytes adhesion in vascular endothelial cells. The effect is mediated via inhibiting activation of NF-kappa-B and CRK/p38 through stimulation of AKT1/NOS3 signaling and nitric oxide production. Exhibits an antimicrobial function in the skin. This chain is Retinoic acid receptor responder protein 2 (Rarres2), found in Mus musculus (Mouse).